A 329-amino-acid polypeptide reads, in one-letter code: PDZ and LIM domain protein 1 (329 aa).

Position 2 is an N-acetylthreonine (threonine 2). Positions 3–85 (TQQIDLQGPG…NLTLTVARSE (83 aa)) constitute a PDZ domain. A phosphoserine mark is found at serine 90 and serine 130. At tyrosine 144 the chain carries Phosphotyrosine. Residues 258-317 (PMCDKCGTGIVGVFVKLRDRHRHPECYVCTDCGTNLKQKGHFFVEDQIYCEKHARERVTP) form the LIM zinc-binding domain. 8 residues coordinate Zn(2+): cysteine 260, cysteine 263, histidine 280, cysteine 283, cysteine 286, cysteine 289, cysteine 307, and histidine 310. Threonine 316 carries the phosphothreonine modification. Tyrosine 321 carries the phosphotyrosine modification.

Interacts with ACTN1, ACTN2 and ACTN4. Interacts with PDLIM4. Strongly expressed in the heart and skeletal muscle, moderately expressed in the spleen, small intestine, colon, placenta, and lung. A lower level expression is seen in liver, thymus, kidney, prostate and pancreas and is not found in the brain, testis, ovary, and peripheral blood leukocytes.

The protein localises to the cytoplasm. The protein resides in the cytoskeleton. It localises to the myofibril. It is found in the sarcomere. Its subcellular location is the z line. Functionally, cytoskeletal protein that may act as an adapter that brings other proteins (like kinases) to the cytoskeleton. Involved in assembly, disassembly and directioning of stress fibers in fibroblasts. Required for the localization of ACTN1 and PALLD to stress fibers. Required for cell migration and in maintaining cell polarity of fibroblasts. This chain is PDZ and LIM domain protein 1 (PDLIM1), found in Homo sapiens (Human).